The chain runs to 84 residues: Cell division topological specificity factor (84 aa).

It belongs to the MinE family.

Functionally, prevents the cell division inhibition by proteins MinC and MinD at internal division sites while permitting inhibition at polar sites. This ensures cell division at the proper site by restricting the formation of a division septum at the midpoint of the long axis of the cell. The protein is Cell division topological specificity factor of Burkholderia ambifaria (strain MC40-6).